We begin with the raw amino-acid sequence, 291 residues long: Protease HtpX homolog (291 aa).

A run of 2 helical transmembrane segments spans residues valine 4–isoleucine 24 and methionine 38–leucine 58. Histidine 144 provides a ligand contact to Zn(2+). Glutamate 145 is an active-site residue. Histidine 148 provides a ligand contact to Zn(2+). Transmembrane regions (helical) follow at residues leucine 159–valine 179 and isoleucine 199–phenylalanine 219. Glutamate 224 serves as a coordination point for Zn(2+).

Belongs to the peptidase M48B family. Requires Zn(2+) as cofactor.

It localises to the cell inner membrane. This is Protease HtpX homolog from Pelodictyon phaeoclathratiforme (strain DSM 5477 / BU-1).